A 434-amino-acid polypeptide reads, in one-letter code: Chaperone SurA (434 aa).

The N-terminal stretch at 1–22 (MKPSKHLIFALFALAISQPTMA) is a signal peptide. PpiC domains are found at residues 173-274 (DVEY…KIMD) and 283-383 (IEEV…QLEE).

It localises to the periplasm. The catalysed reaction is [protein]-peptidylproline (omega=180) = [protein]-peptidylproline (omega=0). Its function is as follows. Chaperone involved in the correct folding and assembly of outer membrane proteins. Recognizes specific patterns of aromatic residues and the orientation of their side chains, which are found more frequently in integral outer membrane proteins. May act in both early periplasmic and late outer membrane-associated steps of protein maturation. The protein is Chaperone SurA of Shewanella sp. (strain MR-7).